Consider the following 467-residue polypeptide: Uronate isomerase (467 aa).

It belongs to the metallo-dependent hydrolases superfamily. Uronate isomerase family.

The catalysed reaction is D-glucuronate = D-fructuronate. It carries out the reaction aldehydo-D-galacturonate = keto-D-tagaturonate. The protein operates within carbohydrate metabolism; pentose and glucuronate interconversion. The sequence is that of Uronate isomerase from Actinobacillus succinogenes (strain ATCC 55618 / DSM 22257 / CCUG 43843 / 130Z).